A 264-amino-acid chain; its full sequence is Thiazole synthase (264 aa).

K106 acts as the Schiff-base intermediate with DXP in catalysis. 1-deoxy-D-xylulose 5-phosphate is bound by residues G167, 193–194 (AG), and 215–216 (NT).

This sequence belongs to the ThiG family. In terms of assembly, homotetramer. Forms heterodimers with either ThiH or ThiS.

Its subcellular location is the cytoplasm. The enzyme catalyses [ThiS sulfur-carrier protein]-C-terminal-Gly-aminoethanethioate + 2-iminoacetate + 1-deoxy-D-xylulose 5-phosphate = [ThiS sulfur-carrier protein]-C-terminal Gly-Gly + 2-[(2R,5Z)-2-carboxy-4-methylthiazol-5(2H)-ylidene]ethyl phosphate + 2 H2O + H(+). The protein operates within cofactor biosynthesis; thiamine diphosphate biosynthesis. Functionally, catalyzes the rearrangement of 1-deoxy-D-xylulose 5-phosphate (DXP) to produce the thiazole phosphate moiety of thiamine. Sulfur is provided by the thiocarboxylate moiety of the carrier protein ThiS. In vitro, sulfur can be provided by H(2)S. The protein is Thiazole synthase of Xanthomonas axonopodis pv. citri (strain 306).